The sequence spans 87 residues: uncharacterized protein (87 aa).

A run of 2 helical transmembrane segments spans residues L25–G45 and Y53–F73.

Its subcellular location is the cell membrane. This is an uncharacterized protein from Paracoccus denitrificans.